Consider the following 190-residue polypeptide: Superoxide dismutase [Cu-Zn] (190 aa).

A signal peptide spans 1–23; that stretch reads MKLTNLALAFTLFGASAVAFAHA. Residues His-83, His-85, and His-108 each contribute to the Cu cation site. Residues Cys-90 and Cys-186 are joined by a disulfide bond. Residues His-108, His-117, His-126, and Asp-129 each coordinate Zn(2+). The tract at residues 162 to 181 is disordered; it reads MIHEGGDNHSDHPAPLGGGG. Cu cation is bound at residue His-164.

The protein belongs to the Cu-Zn superoxide dismutase family. In terms of assembly, homodimer. Cu cation serves as cofactor. The cofactor is Zn(2+).

The protein resides in the periplasm. It carries out the reaction 2 superoxide + 2 H(+) = H2O2 + O2. Its function is as follows. Destroys radicals which are normally produced within the cells and which are toxic to biological systems. This chain is Superoxide dismutase [Cu-Zn] (sodC), found in Actinobacillus pleuropneumoniae (Haemophilus pleuropneumoniae).